We begin with the raw amino-acid sequence, 293 residues long: Elongation factor Ts (293 aa).

The tract at residues 80-83 is involved in Mg(2+) ion dislocation from EF-Tu; the sequence is TDFV.

It belongs to the EF-Ts family.

It is found in the cytoplasm. Functionally, associates with the EF-Tu.GDP complex and induces the exchange of GDP to GTP. It remains bound to the aminoacyl-tRNA.EF-Tu.GTP complex up to the GTP hydrolysis stage on the ribosome. The polypeptide is Elongation factor Ts (Staphylococcus aureus (strain Mu3 / ATCC 700698)).